A 283-amino-acid chain; its full sequence is Pantothenate synthetase (283 aa).

30–37 is a binding site for ATP; sequence MGALHEGH. His-37 serves as the catalytic Proton donor. Gln-61 contributes to the (R)-pantoate binding site. Gln-61 contacts beta-alanine. 147 to 150 is a binding site for ATP; the sequence is GEKD. A (R)-pantoate-binding site is contributed by Gln-153. Residues Val-176 and 184–187 each bind ATP; that span reads VSSR.

The protein belongs to the pantothenate synthetase family. Homodimer.

The protein localises to the cytoplasm. It carries out the reaction (R)-pantoate + beta-alanine + ATP = (R)-pantothenate + AMP + diphosphate + H(+). Its pathway is cofactor biosynthesis; (R)-pantothenate biosynthesis; (R)-pantothenate from (R)-pantoate and beta-alanine: step 1/1. Catalyzes the condensation of pantoate with beta-alanine in an ATP-dependent reaction via a pantoyl-adenylate intermediate. The protein is Pantothenate synthetase of Chlorobium limicola (strain DSM 245 / NBRC 103803 / 6330).